The primary structure comprises 358 residues: MSQAAGNPYAAELAAAKKAVTLAARLCQAVQKDILQSGVQSKADQSPVTVADYGSQILVSLVLKMEAPASSSFSMVAEEDSEELRKEGAEEILENITELVNETIVDDGTYSIYFSKEGILSAIDDGKSEGGPSGRHWVLDPIDGTKGFLRGDQYAIALALLDEGKVVLGVLACPNLSLGSIGNLNGGSSGDQVGALFSATIGCGAEVESLQGSPAQKISVCSIDNPVEASFFESYEGAHSLRDLTGSIAEKLGVQAPPVRIDSQAKYGALARGDGAIYLRFPHKGYREKIWDHAAGSIVVTEAGGLVTDASGNDLDFSKGRFLDLDTGIIATNKQLMPSLLKAVQDAIKEQNQAASPL.

The Proton acceptor role is filled by Asp-52. 4 residues coordinate Mg(2+): Glu-78, Asp-140, Ile-142, and Asp-143. Catalysis depends on Thr-145, which acts as the Proton acceptor. Thr-145, His-239, Ser-263, Lys-266, Arg-280, and Asp-292 together coordinate adenosine 3',5'-bisphosphate. AMP is bound by residues His-239, Ser-263, Lys-266, Arg-280, and Asp-292. Asp-292 contributes to the Mg(2+) binding site.

It belongs to the inositol monophosphatase superfamily. Mg(2+) serves as cofactor. Is constitutively transcribed in both roots and shoots.

It catalyses the reaction 3'-phosphoadenylyl sulfate + H2O = adenosine 5'-phosphosulfate + phosphate. The catalysed reaction is adenosine 3',5'-bisphosphate + H2O = AMP + phosphate. It carries out the reaction adenosine 2',5'-bisphosphate + H2O = AMP + phosphate. Its activity is regulated as follows. Inhibited by Ca(2+), Li(+), and Na(+) and activated by K(+). Phosphatase that converts adenosine 3'-phosphate 5'-phosphosulfate (PAPS) to adenosine 5'-phosphosulfate (APS) and 3'(2')-phosphoadenosine 5'-phosphate (PAP) to AMP. May regulate the flux of sulfur in the sulfur-activation pathway by converting PAPS to APS. Shows no activity on myo-inositol 1-phosphate, beta-glycerol phosphate, NADPH, NADP and 5'-AMP. The polypeptide is 3'(2'),5'-bisphosphate nucleotidase (Oryza sativa (Rice)).